A 293-amino-acid polypeptide reads, in one-letter code: Proline iminopeptidase (293 aa).

The AB hydrolase-1 domain maps to 28-277 (KPLVLLHGGP…FSRHMPFVEE (250 aa)). The Nucleophile role is filled by Ser104. Asp244 is a catalytic residue. His271 acts as the Proton donor in catalysis.

Belongs to the peptidase S33 family.

The enzyme catalyses Release of N-terminal proline from a peptide.. Functionally, releases the N-terminal proline from various substrates. The chain is Proline iminopeptidase from Clostridium botulinum (strain Hall / ATCC 3502 / NCTC 13319 / Type A).